Consider the following 78-residue polypeptide: U-scoloptoxin(15)-Ssm2a (78 aa).

The first 23 residues, 1 to 23, serve as a signal peptide directing secretion; sequence MEKKIIFLCFFVSLLTLPEFISS. The interval 34–37 is important for inhibition of KCNQ4; sequence PEKK. 2 disulfides stabilise this stretch: C44–C70 and C48–C72.

Belongs to the SLPTX(15) family. As to expression, expressed by the venom gland.

It localises to the secreted. The polypeptide is U-scoloptoxin(15)-Ssm2a (Scolopendra mutilans (Chinese red-headed centipede)).